The primary structure comprises 501 residues: MKTSVMDLKVEPMDIDFDQPPPLQVFAHTSTLHGISHIFSYEKITAKCCLWVVFFLSSLTFLMYVCIDRIQFYLEYPHVTKLDEITTPVMVFPAVTICNLNSIRFSRITRNDLYHAGELLALLNSRHEVREAHLVEESVMEVLKSKTDFRSFKPRHFNMWEFYNRTGHDIKDMLLSCQFRGSPCRPEDFSVVFTRYGKCYTFNSGETGPPRVSVKGGMGNGLEIMLDIQQDEYLPVWGESDESSFEAGIKVQIHSQDEPPFIDQLGFGVAPGFQTFVSCQEQRLVYLPAPWGSCKSTPPSSDYFRAYSISACRTDCETRYLVENCNCRMVHMPGDAPYCTPVLYKECAHPALDFLVETDSDYCSCETPCNITRYSKELSFVKIPSKASVKYLAKKYSKSEKYITENVMVLDVFFEALNYETIEQRKAYEVAGLLGDIGGQMGLFIGASILTILELFDYLYEVMKYRLCRCSNKKHHNNNNNTDHNAVFSLDDVNCHVSKFH.

Residues 1–54 (MKTSVMDLKVEPMDIDFDQPPPLQVFAHTSTLHGISHIFSYEKITAKCCLWVVF) lie on the Cytoplasmic side of the membrane. A helical membrane pass occupies residues 55-71 (FLSSLTFLMYVCIDRIQ). Residues 72-429 (FYLEYPHVTK…ETIEQRKAYE (358 aa)) lie on the Extracellular side of the membrane. 7 disulfide bridges follow: Cys-98–Cys-199, Cys-177–Cys-184, Cys-294–Cys-369, Cys-312–Cys-365, Cys-316–Cys-363, Cys-325–Cys-347, and Cys-327–Cys-339. Residue Asn-164 is glycosylated (N-linked (GlcNAc...) asparagine). The N-linked (GlcNAc...) asparagine glycan is linked to Asn-370. A discontinuously helical transmembrane segment spans residues 430-460 (VAGLLGDIGGQMGLFIGASILTILELFDYLY). The GAS motif; ion selectivity filter signature appears at 446–448 (GAS). The Cytoplasmic segment spans residues 461–501 (EVMKYRLCRCSNKKHHNNNNNTDHNAVFSLDDVNCHVSKFH).

It belongs to the amiloride-sensitive sodium channel (TC 1.A.6) family. ASIC1 subfamily. As to quaternary structure, homotrimer. Heterotrimer; with other ASIC proteins producing channel with different properties. Interacts with asic1c. As to expression, expressed in central nervous system. Faintly expressed in the trunk, presumably in dorsal root ganglia.

The protein resides in the cell membrane. It is found in the postsynaptic cell membrane. The protein localises to the cell projection. Its subcellular location is the dendrite. The enzyme catalyses Na(+)(in) = Na(+)(out). The catalysed reaction is K(+)(in) = K(+)(out). It carries out the reaction Li(+)(in) = Li(+)(out). It catalyses the reaction Ca(2+)(in) = Ca(2+)(out). With respect to regulation, inhibited by the diuretic drug amiloride. Forms voltage-independent, pH-gated trimeric sodium channels that act as postsynaptic excitatory receptors in the nervous system, playing a crucial role in regulating synaptic plasticity, learning, and memory. Upon extracellular pH drop this channel elicits transient, fast activating, and completely desensitizing inward currents. Displays high selectivity for sodium ions but can also permit the permeation of other cations. The sequence is that of Acid-sensing ion channel 1A (asic1a) from Danio rerio (Zebrafish).